Here is a 1749-residue protein sequence, read N- to C-terminus: Kinesin-like protein KIF13A (1749 aa).

The Kinesin motor domain occupies 5–352 (KVKVAVRVRP…LRYADRAKRI (348 aa)). 102 to 109 (GQTGSGKS) provides a ligand contact to ATP. Residues 359-431 (NEDPNAKVIR…QERQRQLESM (73 aa)) adopt a coiled-coil conformation. The region spanning 469–519 (HTRVGADTSQDIQLFGIGIQPEHCEIDIAADGDITLTPKENARSCVNGTLV) is the FHA domain. The stretch at 552–775 (LKDFERETSS…VPEAKRLYGK (224 aa)) forms a coiled coil. 2 disordered regions span residues 633–652 (QQLS…LAYS) and 834–853 (IPER…SGSL). A Phosphoserine modification is found at Ser-636. Positions 1086-1126 (SDALIKRREYLDEQIKKVSNKKEKTEDDMEREARLVEQWVG) form a coiled coil. Residue Ser-1274 is modified to Phosphoserine. Residues 1370 to 1383 (LSTPNVHNVSSSRP) show a composition bias toward polar residues. Disordered regions lie at residues 1370–1402 (LSTP…QLDV) and 1417–1436 (TLPR…ENPH). The span at 1421–1430 (DSPRRSKEGC) shows a compositional bias: basic and acidic residues. Residues Ser-1441, Ser-1477, Ser-1481, Ser-1524, Ser-1600, and Ser-1650 each carry the phosphoserine modification. The stretch at 1475 to 1499 (LLSQEDSEEEENELEALSRKLMLTQ) forms a coiled coil. 2 disordered regions span residues 1584-1665 (CAEP…GHQA) and 1698-1749 (DFDG…TATR). Residues 1719-1741 (ETDHKGIPERPPDADRLHPKIEN) are compositionally biased toward basic and acidic residues.

This sequence belongs to the TRAFAC class myosin-kinesin ATPase superfamily. Kinesin family. In terms of assembly, interacts with AP1G1 and AP1G2. Interacts with ZFYVE26. Interacts with AP2B1.

Its subcellular location is the golgi apparatus membrane. The protein resides in the cytoplasm. It is found in the cytoskeleton. The protein localises to the microtubule organizing center. It localises to the centrosome. Its subcellular location is the midbody. The protein resides in the endosome membrane. Functionally, plus end-directed microtubule-dependent motor protein involved in intracellular transport and regulating various processes such as mannose-6-phosphate receptor (M6PR) transport to the plasma membrane, endosomal sorting during melanosome biogenesis and cytokinesis. During melanosome maturation, required for delivering melanogenic enzymes from recycling endosomes to nascent melanosomes by creating peripheral recycling endosomal subdomains in melanocytes. Also required for the abscission step in cytokinesis: mediates translocation of ZFYVE26, and possibly TTC19, to the midbody during cytokinesis. Mediates the transport of M6PR-containing vesicles from trans-Golgi network to the plasma membrane via direct interaction with the AP-1 complex. This chain is Kinesin-like protein KIF13A (Kif13a), found in Mus musculus (Mouse).